Here is a 159-residue protein sequence, read N- to C-terminus: Fimbrial protein MyfA (159 aa).

Residues 1–29 (MNMKKFVKKPLAIAVLMLASGGMVNMVHA) form the signal peptide.

Forms a homomer composed of subunits assembled in a large structure resistant to proteases and chaotropic agents.

It localises to the fimbrium. Functionally, major pilus subunit. Expressed only in pathogenic serotypes, it is part of myf, a probable virulence factor. The chain is Fimbrial protein MyfA (myfA) from Yersinia enterocolitica.